The chain runs to 175 residues: Transcriptional regulator GadE (175 aa).

An HTH luxR-type domain is found at 109-174; it reads HKNSQLCFSH…DIVTLGITSY (66 aa). Positions 133–152 form a DNA-binding region, H-T-H motif; it reads ESNITSTLNISQQTLKIQKF.

Regulates the expression of several genes involved in acid resistance. Required for the expression of gadA and gadBC, among others, regardless of media or growth conditions. Binds directly to the 20 bp GAD box found in the control regions of both loci. Could be involved in the regulation of the genes coding for the type III secretion system in enterohaemorragic strains. This chain is Transcriptional regulator GadE (gadE), found in Escherichia coli O157:H7.